The chain runs to 191 residues: Potassium-transporting ATPase KdpC subunit (191 aa).

The chain crosses the membrane as a helical span at residues 10 to 30; sequence ITLVFCVFFSVFYILVLWLFA.

It belongs to the KdpC family. The system is composed of three essential subunits: KdpA, KdpB and KdpC.

It is found in the cell inner membrane. Its function is as follows. Part of the high-affinity ATP-driven potassium transport (or Kdp) system, which catalyzes the hydrolysis of ATP coupled with the electrogenic transport of potassium into the cytoplasm. This subunit acts as a catalytic chaperone that increases the ATP-binding affinity of the ATP-hydrolyzing subunit KdpB by the formation of a transient KdpB/KdpC/ATP ternary complex. The sequence is that of Potassium-transporting ATPase KdpC subunit from Bacteroides fragilis (strain YCH46).